Here is a 254-residue protein sequence, read N- to C-terminus: Nickel import ATP-binding protein NikO (254 aa).

The region spanning 5-246 (FELQGVQFAY…TALLRRARLL (242 aa)) is the ABC transporter domain. Position 37–44 (37–44 (GANGSGKS)) interacts with ATP.

It belongs to the ABC transporter superfamily. In terms of assembly, forms an energy-coupling factor (ECF) transporter complex composed of an ATP-binding protein (A component, NikO), a transmembrane protein (T component, NikQ) and a fused possible substrate-capture protein (S component, NikMN) of unknown stoichimetry.

The protein localises to the cell inner membrane. It catalyses the reaction Ni(2+)(out) + ATP + H2O = Ni(2+)(in) + ADP + phosphate + H(+). Part of the energy-coupling factor (ECF) transporter complex NikMNQO involved in nickel import. The complex confers nickel uptake upon expression in E.coli. Shows very low activity with cobalt. Presumably responsible for energy coupling to the transport system. The polypeptide is Nickel import ATP-binding protein NikO (Rhodobacter capsulatus (strain ATCC BAA-309 / NBRC 16581 / SB1003)).